The following is a 258-amino-acid chain: GTP cyclohydrolase FolE2 (258 aa).

This sequence belongs to the GTP cyclohydrolase IV family.

It catalyses the reaction GTP + H2O = 7,8-dihydroneopterin 3'-triphosphate + formate + H(+). It functions in the pathway cofactor biosynthesis; 7,8-dihydroneopterin triphosphate biosynthesis; 7,8-dihydroneopterin triphosphate from GTP: step 1/1. Functionally, converts GTP to 7,8-dihydroneopterin triphosphate. In Geobacter sulfurreducens (strain ATCC 51573 / DSM 12127 / PCA), this protein is GTP cyclohydrolase FolE2.